The sequence spans 585 residues: Arginine--tRNA ligase (585 aa).

The 'HIGH' region motif lies at 131-141; that stretch reads ANPTGPMHVGH.

This sequence belongs to the class-I aminoacyl-tRNA synthetase family. As to quaternary structure, monomer.

It is found in the cytoplasm. The catalysed reaction is tRNA(Arg) + L-arginine + ATP = L-arginyl-tRNA(Arg) + AMP + diphosphate. In Bartonella bacilliformis (strain ATCC 35685 / KC583 / Herrer 020/F12,63), this protein is Arginine--tRNA ligase.